A 236-amino-acid chain; its full sequence is 2,3,4,5-tetrahydropyridine-2,6-dicarboxylate N-acetyltransferase (236 aa).

This sequence belongs to the transferase hexapeptide repeat family. DapH subfamily.

It catalyses the reaction (S)-2,3,4,5-tetrahydrodipicolinate + acetyl-CoA + H2O = L-2-acetamido-6-oxoheptanedioate + CoA. Its pathway is amino-acid biosynthesis; L-lysine biosynthesis via DAP pathway; LL-2,6-diaminopimelate from (S)-tetrahydrodipicolinate (acetylase route): step 1/3. Its function is as follows. Catalyzes the transfer of an acetyl group from acetyl-CoA to tetrahydrodipicolinate. The polypeptide is 2,3,4,5-tetrahydropyridine-2,6-dicarboxylate N-acetyltransferase (Clostridium botulinum (strain Kyoto / Type A2)).